Reading from the N-terminus, the 1106-residue chain is Protein shuttle craft (1106 aa).

Disordered stretches follow at residues 7 to 26 and 189 to 371; these read QLTN…AMAD and PAAA…KLSQ. Over residues 189 to 201 the composition is skewed to low complexity; sequence PAAATTNGNSTAS. 2 stretches are compositionally biased toward basic and acidic residues: residues 232 to 270 and 278 to 323; these read NYER…RDSR and RRSD…RDRI. A Phosphothreonine modification is found at Thr-335. Ser-336, Ser-339, Ser-343, and Ser-354 each carry phosphoserine. Polar residues predominate over residues 336-354; it reads SNESAHPSPEKQSQLQQIS. An RING-type; atypical zinc finger spans residues 386 to 433; that stretch reads CLVCVEAIKSHQPTWSCRNCYHMLHLKCTITWASSSKSEVGWRCPACQ. 8 NF-X1-type zinc fingers span residues 474–492, 527–546, 585–604, 644–667, 706–725, 733–752, 844–867, and 876–896; these read CSHA…PCQA, CGEH…ACSE, CGHH…PCKL, CGKP…PCPK, CGKH…DCPL, CGKH…PCYR, CGGH…ICRQ, and CGHK…PCKE. Residues 1006–1071 enclose the R3H domain; that stretch reads TKSVYETLTD…NRNVVATAHK (66 aa).

This sequence belongs to the NFX1 family. As to expression, ovaries and embryonic central nervous system.

It is found in the nucleus. Its function is as follows. Plays an essential role during the late stages of embryonic neurogenesis. May either fine-tune the guidance or the spatial maintenance of the migrating SNB and in nerve roots, which are composed of axons originating from distinct groups of motor neurons and may be required to either guide or maintain the position of these nerves along a direct and straight path to their ultimate targets in particular muscle fields. May play a role in egg chamber development and/or may confer essential maternal contributions to the early embryo. This is Protein shuttle craft (stc) from Drosophila melanogaster (Fruit fly).